Here is a 429-residue protein sequence, read N- to C-terminus: Histidine--tRNA ligase (429 aa).

Belongs to the class-II aminoacyl-tRNA synthetase family. In terms of assembly, homodimer.

The protein resides in the cytoplasm. It carries out the reaction tRNA(His) + L-histidine + ATP = L-histidyl-tRNA(His) + AMP + diphosphate + H(+). This chain is Histidine--tRNA ligase, found in Pseudomonas paraeruginosa (strain DSM 24068 / PA7) (Pseudomonas aeruginosa (strain PA7)).